We begin with the raw amino-acid sequence, 756 residues long: ATP-dependent zinc metalloprotease FtsH (756 aa).

At 1 to 44 (MGVPAGMPHPNGLQPQRKDKALAQNPNTPQKGSEAFLKKLIHSS) the chain is on the cytoplasmic side. The chain crosses the membrane as a helical span at residues 45–65 (WFFPGAAIVVMLGFLMASFFT). Residues 66 to 148 (QPSRQVDTNV…SYTDQPVEHS (83 aa)) lie on the Extracellular side of the membrane. Residues 149 to 169 (FLGSLVSLLLPILLFGVLFWF) traverse the membrane as a helical segment. The Cytoplasmic portion of the chain corresponds to 170-756 (LMGRVGGGSS…NQNGAENERG (587 aa)). Position 241–248 (241–248 (GPPGTGKT)) interacts with ATP. Position 463 (histidine 463) interacts with Zn(2+). Residue glutamate 464 is part of the active site. Positions 467 and 539 each coordinate Zn(2+). 2 stretches are compositionally biased toward basic and acidic residues: residues 647–662 (PERE…ERTD) and 672–681 (LAKEAEKSEE). The disordered stretch occupies residues 647–756 (PEREHWYSKP…NQNGAENERG (110 aa)). Composition is skewed to low complexity over residues 684-703 (AEAP…VPVA) and 713-724 (PLTDPDADPTVA). Positions 744-756 (GTPNQNGAENERG) are enriched in polar residues.

It in the central section; belongs to the AAA ATPase family. This sequence in the C-terminal section; belongs to the peptidase M41 family. Homohexamer. Zn(2+) serves as cofactor.

It is found in the cell membrane. Acts as a processive, ATP-dependent zinc metallopeptidase for both cytoplasmic and membrane proteins. Plays a role in the quality control of integral membrane proteins. The protein is ATP-dependent zinc metalloprotease FtsH of Rothia mucilaginosa (strain DY-18) (Stomatococcus mucilaginosus).